The primary structure comprises 233 residues: Ubiquinone biosynthesis O-methyltransferase (233 aa).

S-adenosyl-L-methionine-binding residues include Arg37, Gly56, Asp77, and Met121.

It belongs to the methyltransferase superfamily. UbiG/COQ3 family.

The enzyme catalyses a 3-demethylubiquinol + S-adenosyl-L-methionine = a ubiquinol + S-adenosyl-L-homocysteine + H(+). It carries out the reaction a 3-(all-trans-polyprenyl)benzene-1,2-diol + S-adenosyl-L-methionine = a 2-methoxy-6-(all-trans-polyprenyl)phenol + S-adenosyl-L-homocysteine + H(+). Its pathway is cofactor biosynthesis; ubiquinone biosynthesis. O-methyltransferase that catalyzes the 2 O-methylation steps in the ubiquinone biosynthetic pathway. The chain is Ubiquinone biosynthesis O-methyltransferase from Azoarcus sp. (strain BH72).